The sequence spans 96 residues: SAGA complex subunit SUS1 (96 aa).

Lys-68 participates in a covalent cross-link: Glycyl lysine isopeptide (Lys-Gly) (interchain with G-Cter in ubiquitin).

This sequence belongs to the ENY2 family. Component of the 1.8 MDa SAGA (Spt-Ada-Gcn5 acetyltransferase) complex, which is composed of 19 subunits TRA1, SPT7, TAF5, NGG1/ADA3, SGF73, SPT20/ADA5, SPT8, TAF12, TAF6, HFI1/ADA1, UBP8, GCN5, ADA2, SPT3, SGF29, TAF10, TAF9, SGF11 and SUS1. The SAGA complex is composed of 4 modules, namely the HAT (histone acetyltransferase) module (GCN5, ADA2, NGG1/ADA3 and SGF29), the DUB (deubiquitinating) module (UBP8, SGF11, SGF73 and SUS1), the core or TAF (TBP-associated factor) module (TAF5, TAF6, TAF9, TAF10 and TAF12), and the Tra1 or SPT (Suppressor of Ty) module (TRA1, HFI1/ADA1, SPT3, SPT7, SPT8 and SPT20/ADA5). The Tra1/SPT module binds activators, the core module recruits TBP (TATA-binding protein), the HAT module contains the histone H3 acetyltransferase GCN5, and the DUB module comprises the histone H2B deubiquitinase UBP8. Also identified in an altered form of SAGA, named SALSA (SAGA altered, Spt8 absent) or SLIK (SAGA-like) complex, which contains a C-terminal truncated form of SPT7 and is missing SPT8. However, it has been shown that the SAGA and SAGA-like SALSA/SLIK transcriptional coactivators are structurally and biochemically equivalent. Component of the nuclear pore complex (NPC)-associated TREX-2 complex (transcription and export complex 2), composed of at least SUS1, SAC3, THP1, SEM1, and CDC31. TREX-2 contains 2 SUS1 chains. The TREX-2 complex interacts with the mRNA export factors MEX67, MTR2 and SUB2, and the nucleoporin NUP1. Interacts directly with THP1, SAC3. Interacts directly with SGF11 and UBP8. Interacts with YRA1, MEX67 and with the RNA polymerase II.

Its subcellular location is the nucleus. The protein localises to the nucleoplasm. It is found in the cytoplasm. The protein resides in the P-body. Involved in mRNA export coupled transcription activation by association with both the TREX-2 and the SAGA complexes. SAGA acts as a general cofactor required for essentially all RNA polymerase II transcription. At the promoters, SAGA is required for transcription pre-initiation complex (PIC) recruitment. It influences RNA polymerase II transcriptional activity through different activities such as TBP interaction (via core/TAF module) and promoter selectivity, interaction with transcription activators (via Tra1/SPT module), and chromatin modification through histone acetylation (via HAT module) and deubiquitination (via DUB module). SAGA preferentially acetylates histones H3 (to form H3K9ac, H3K14ac, H3K18ac and H3K23ac) and H2B and deubiquitinates histone H2B. SAGA interacts with DNA via upstream activating sequences (UASs). Also identified in a modified version of SAGA named SALSA or SLIK. The cleavage of SPT7 and the absence of the SPT8 subunit in SLIK neither drive any major conformational differences in its structure compared with SAGA, nor significantly affect HAT, DUB, or DNA-binding activities. Within the SAGA complex, participates in a subcomplex with SGF11, SGF73 and UBP8 required for deubiquitination of H2B and for the maintenance of steady-state H3 methylation levels. The TREX-2 complex functions in docking export-competent ribonucleoprotein particles (mRNPs) to the nuclear entrance of the nuclear pore complex (nuclear basket), by association with components of the nuclear mRNA export machinery (MEX67-MTR2 and SUB2) in the nucleoplasm and the nucleoporin NUP1 at the nuclear basket. TREX-2 participates in mRNA export and accurate chromatin positioning in the nucleus by tethering genes to the nuclear periphery. SUS1 also has a role in mRNP biogenesis and maintenance of genome integrity through preventing RNA-mediated genome instability. Has a role in response to DNA damage induced by methyl methane sulfonate (MMS) and replication arrest induced by hydroxyurea. May also be involved in cytoplasmic mRNA decay by interaction with components of P-bodies. This chain is SAGA complex subunit SUS1, found in Saccharomyces cerevisiae (strain ATCC 204508 / S288c) (Baker's yeast).